Reading from the N-terminus, the 458-residue chain is MNTTNKESTAELNNTESNNNYNNFAENGNIINLKQLKRKLPEELQAQAEELKIENINSLLKQELVFAILKKSVEQGVLIVGEGVLEVLPDGFGFLRSPEVNYLAGPDDIYISPSQIRRFGLRTGDTVEGQIRAPKAGERYFALLKVNRVNFEDPSKAYHRVHFDNLTPLYPDEKLGLELENNSKDSKDFSTRVIELVAPMGKGQRALIVAPPRTGKTVLLQNIAHAITTNNPEVFLIVLLIDERPEEVTDMQRSVRGEVVSSTFDEPASRHVQLAEMVIKKAKRLVEHKKDVVILVDAITRLARAYNTVVPSSGKVLTGGVDANALQRPKRFFGAARNIENGGSLTIIGTALIETGSRMDEVIFEEFKGTGNSEIVLDRKIADKRIYPAIDITRSGTRKEDLLVDKIILNKMWVLRRIIDPMGSSEAIEFLLKKLENTKTNGEFFEMMKSPERPKNGL.

Residues 1 to 23 (MNTTNKESTAELNNTESNNNYNN) are disordered. Residues 10 to 23 (AELNNTESNNNYNN) show a composition bias toward low complexity. Residues 78-153 (LIVGEGVLEV…LKVNRVNFED (76 aa)) form the Rho RNA-BD domain. ATP-binding positions include 201 to 206 (GKGQRA), 213 to 218 (RTGKTV), and Arg-244.

The protein belongs to the Rho family. As to quaternary structure, homohexamer. The homohexamer assembles into an open ring structure.

Its function is as follows. Facilitates transcription termination by a mechanism that involves Rho binding to the nascent RNA, activation of Rho's RNA-dependent ATPase activity, and release of the mRNA from the DNA template. This Rickettsia conorii (strain ATCC VR-613 / Malish 7) protein is Transcription termination factor Rho.